Consider the following 221-residue polypeptide: Thiopurine S-methyltransferase (221 aa).

S-adenosyl-L-methionine-binding residues include tryptophan 12, leucine 47, glutamate 68, and arginine 125.

Belongs to the class I-like SAM-binding methyltransferase superfamily. TPMT family.

The protein localises to the cytoplasm. The enzyme catalyses S-adenosyl-L-methionine + a thiopurine = S-adenosyl-L-homocysteine + a thiopurine S-methylether.. The protein is Thiopurine S-methyltransferase of Legionella pneumophila (strain Corby).